The chain runs to 433 residues: GTPase Obg (433 aa).

The 159-residue stretch at 1 to 159 (MAITDYCECR…LNVSLEVKYL (159 aa)) folds into the Obg domain. The region spanning 160–329 (ANVGIVGFPN…LLDRVFELYN (170 aa)) is the OBG-type G domain. Residues 166–173 (GFPNSGKS), 191–195 (FTTLI), 212–215 (DIPG), 282–285 (NKID), and 310–312 (ISA) contribute to the GTP site. Mg(2+) is bound by residues serine 173 and threonine 193. The OCT domain maps to 355-433 (TNENNNDPLN…FDGCEFVIND (79 aa)).

Belongs to the TRAFAC class OBG-HflX-like GTPase superfamily. OBG GTPase family. Monomer. Requires Mg(2+) as cofactor.

Its subcellular location is the cytoplasm. In terms of biological role, an essential GTPase which binds GTP, GDP and possibly (p)ppGpp with moderate affinity, with high nucleotide exchange rates and a fairly low GTP hydrolysis rate. Plays a role in control of the cell cycle, stress response, ribosome biogenesis and in those bacteria that undergo differentiation, in morphogenesis control. The sequence is that of GTPase Obg from Mycoplasma genitalium (strain ATCC 33530 / DSM 19775 / NCTC 10195 / G37) (Mycoplasmoides genitalium).